Here is a 621-residue protein sequence, read N- to C-terminus: Solute carrier family 2, facilitated glucose transporter member 12 (621 aa).

At 1–48 (MVPVENTEGPNLLNQKGTAVETEGSYRASGSRHPPWARGCGMFTFLSS) the chain is on the cytoplasmic side. A helical membrane pass occupies residues 49–69 (VTAAVSGLLVGYELGIISGAL). Residues 70-84 (LQIKTLLTLSCHEQE) are Extracellular-facing. Residues 85–105 (MVVSSLLIGALLASLTGGVLI) traverse the membrane as a helical segment. Residues 106–119 (DRYGRRTAIILSSC) are Cytoplasmic-facing. Residues 120 to 140 (LLGLGSLVLILSLSYTVLIVG) form a helical membrane-spanning segment. A topological domain (extracellular) is located at residue arginine 141. The chain crosses the membrane as a helical span at residues 142-162 (IAIGVSISLSSIATCVYIAEI). Over 163-176 (APQHRRGLLVSLNE) the chain is Cytoplasmic. A helical membrane pass occupies residues 177 to 197 (LMIVIGILSAYISNYAFANVF). Topologically, residues 198–201 (HGWK) are extracellular. A helical membrane pass occupies residues 202 to 222 (YMFGLVIPLGILQAIAMYFLP). Over 223–282 (PSPRFLVMKGQEGAASKVLGRLRALSDATEELTVIKSSLKDEYQYSFWDLFRSKDNMRTR) the chain is Cytoplasmic. A helical transmembrane segment spans residues 283-303 (IMIGLTLVFFVQITGQPNILF). The Extracellular segment spans residues 304–321 (YASTVLKSVGFQSNEAAS). A helical transmembrane segment spans residues 322–342 (LASTGVGVVKVISTIPATLLV). At 343–349 (DHVGSKT) the chain is on the cytoplasmic side. Residues 350–370 (FLCIGSSVMAASLVTMGIVNL) traverse the membrane as a helical segment. Residues 371–470 (NIHMNFTNIC…PAFLKWLSLA (100 aa)) lie on the Extracellular side of the membrane. Residues asparagine 375, asparagine 387, asparagine 400, and asparagine 405 are each glycosylated (N-linked (GlcNAc...) asparagine). The helical transmembrane segment at 471–491 (SLLVYVAAFSIGLGPMPWLVL) threads the bilayer. Residues 492 to 502 (SEIFPGGIRGR) lie on the Cytoplasmic side of the membrane. Residues 503–523 (AMALTSSMNWGINLLISLTFL) form a helical membrane-spanning segment. Residues 524–532 (TVTDLIGLP) are Extracellular-facing. Residues 533 to 553 (WVCFIYTIMSLASLLFVVMFI) traverse the membrane as a helical segment. Residues 554–621 (PETKGCSLEQ…GQSRQLSPEN (68 aa)) are Cytoplasmic-facing.

It belongs to the major facilitator superfamily. Sugar transporter (TC 2.A.1.1) family. Glucose transporter subfamily.

The protein resides in the cell membrane. The protein localises to the endomembrane system. Its subcellular location is the cytoplasm. It is found in the perinuclear region. It carries out the reaction D-glucose(out) = D-glucose(in). Insulin-independent facilitative glucose transporter. The polypeptide is Solute carrier family 2, facilitated glucose transporter member 12 (Macaca fascicularis (Crab-eating macaque)).